A 277-amino-acid chain; its full sequence is Bis(5'-nucleosyl)-tetraphosphatase, symmetrical (277 aa).

This sequence belongs to the Ap4A hydrolase family.

It catalyses the reaction P(1),P(4)-bis(5'-adenosyl) tetraphosphate + H2O = 2 ADP + 2 H(+). Hydrolyzes diadenosine 5',5'''-P1,P4-tetraphosphate to yield ADP. This Methylobacillus flagellatus (strain ATCC 51484 / DSM 6875 / VKM B-1610 / KT) protein is Bis(5'-nucleosyl)-tetraphosphatase, symmetrical.